The chain runs to 75 residues: UPF0154 protein MYPU_1460 (75 aa).

Residues 8–28 (GLIVGLSILFFIIGGVVAFFV) traverse the membrane as a helical segment.

Belongs to the UPF0154 family.

Its subcellular location is the membrane. The protein is UPF0154 protein MYPU_1460 of Mycoplasmopsis pulmonis (strain UAB CTIP) (Mycoplasma pulmonis).